The sequence spans 329 residues: Probable ABC transporter permease protein MG188 homolog (329 aa).

A run of 6 helical transmembrane segments spans residues 30–50 (FLLF…PFFL), 96–116 (IISL…IVFV), 128–148 (VFFL…IYIL), 176–196 (ALWG…VLVI), 234–254 (LIFL…ISLF), and 283–303 (NFAG…GLVL). In terms of domain architecture, ABC transmembrane type-1 spans 88 to 303 (LRNSFLYSII…ILGVCYGLVL (216 aa)).

Belongs to the binding-protein-dependent transport system permease family. MalFG subfamily.

Its subcellular location is the cell membrane. Its function is as follows. Probably part of a binding-protein-dependent transport system. Probably responsible for the translocation of the substrate across the membrane. This Mycoplasma pneumoniae (strain ATCC 29342 / M129 / Subtype 1) (Mycoplasmoides pneumoniae) protein is Probable ABC transporter permease protein MG188 homolog.